The primary structure comprises 78 residues: Acyl carrier protein (78 aa).

One can recognise a Carrier domain in the interval 2 to 77 (SEIAQKVKSI…QAIAYLEQHV (76 aa)). O-(pantetheine 4'-phosphoryl)serine is present on S37.

The protein belongs to the acyl carrier protein (ACP) family. 4'-phosphopantetheine is transferred from CoA to a specific serine of apo-ACP by AcpS. This modification is essential for activity because fatty acids are bound in thioester linkage to the sulfhydryl of the prosthetic group.

It is found in the cytoplasm. The protein operates within lipid metabolism; fatty acid biosynthesis. In terms of biological role, carrier of the growing fatty acid chain in fatty acid biosynthesis. This Cytophaga hutchinsonii (strain ATCC 33406 / DSM 1761 / CIP 103989 / NBRC 15051 / NCIMB 9469 / D465) protein is Acyl carrier protein.